Reading from the N-terminus, the 322-residue chain is uncharacterized protein (322 aa).

The helical transmembrane segment at 299–319 (GLLLEGTIVALILLEIILALA) threads the bilayer.

It is found in the membrane. This is an uncharacterized protein from Methanocaldococcus jannaschii (strain ATCC 43067 / DSM 2661 / JAL-1 / JCM 10045 / NBRC 100440) (Methanococcus jannaschii).